The chain runs to 243 residues: Anti-H(O) lectin 1 (243 aa).

A glycan (N-linked (GlcNAc...) asparagine; partial) is linked at Asn-10. Asn-116 is a glycosylation site (N-linked (GlcNAc...) asparagine). Residues Glu-126 and Asp-128 each coordinate Mn(2+). Ca(2+)-binding residues include Asp-128, Asn-135, and Asp-138. Mn(2+) contacts are provided by Asp-138 and His-143.

The protein belongs to the leguminous lectin family.

Functionally, L-fucose specific lectin. The sequence is that of Anti-H(O) lectin 1 from Ulex europaeus (Furze).